The sequence spans 421 residues: MRILILGSGVVGTASAYYLAKAGHEVTVLDRQRAAGMETSFANAGQVSPGYSAPWAGPGIPVKAIKWLLMHHRPLVVWPSLDPKLYLWLAKMLANCTEEAYRRNKARMVALAEYSRDALDALRSETGIAYDERMLGTLQLFRTRKQLDHVHSDTEVLDAHNVRYELLDPSGCIRAEPALARVRDKFVGGLRLPGDETGDAHIFTRNLADICARQGVTFRYGVTVEGLRHEAGRITGVALAGGEIATADIYVAAMGSYTPALLAPLGIRLPVYPVKGYSLTLPITDPDAAPRSTVMDETYKVAITRLGERIRVGGTAELAGFDLSLREPRRATLAHSVGDLFPAGGDISKATFWTGLRPMTPDGTPIIGPTKLDNLFTNTGHGTLGWTMACGSGRVLADLIGGRAPDIDTADLSVARYAEAA.

3-17 is a binding site for FAD; the sequence is ILILGSGVVGTASAY.

It belongs to the DadA oxidoreductase family. It depends on FAD as a cofactor.

The catalysed reaction is a D-alpha-amino acid + A + H2O = a 2-oxocarboxylate + AH2 + NH4(+). It participates in amino-acid degradation; D-alanine degradation; NH(3) and pyruvate from D-alanine: step 1/1. Its function is as follows. Oxidative deamination of D-amino acids. The polypeptide is D-amino acid dehydrogenase (Xanthobacter autotrophicus (strain ATCC BAA-1158 / Py2)).